Reading from the N-terminus, the 89-residue chain is Small ribosomal subunit protein uS15 (89 aa).

Belongs to the universal ribosomal protein uS15 family. In terms of assembly, part of the 30S ribosomal subunit. Forms a bridge to the 50S subunit in the 70S ribosome, contacting the 23S rRNA.

Its function is as follows. One of the primary rRNA binding proteins, it binds directly to 16S rRNA where it helps nucleate assembly of the platform of the 30S subunit by binding and bridging several RNA helices of the 16S rRNA. In terms of biological role, forms an intersubunit bridge (bridge B4) with the 23S rRNA of the 50S subunit in the ribosome. In Limosilactobacillus reuteri (strain DSM 20016) (Lactobacillus reuteri), this protein is Small ribosomal subunit protein uS15.